Reading from the N-terminus, the 194-residue chain is ATP-dependent Clp protease proteolytic subunit 3 (194 aa).

The active-site Nucleophile is the Ser96. His121 is a catalytic residue.

The protein belongs to the peptidase S14 family. In terms of assembly, fourteen ClpP subunits assemble into 2 heptameric rings which stack back to back to give a disk-like structure with a central cavity, resembling the structure of eukaryotic proteasomes.

The protein localises to the cytoplasm. The enzyme catalyses Hydrolysis of proteins to small peptides in the presence of ATP and magnesium. alpha-casein is the usual test substrate. In the absence of ATP, only oligopeptides shorter than five residues are hydrolyzed (such as succinyl-Leu-Tyr-|-NHMec, and Leu-Tyr-Leu-|-Tyr-Trp, in which cleavage of the -Tyr-|-Leu- and -Tyr-|-Trp bonds also occurs).. Its function is as follows. Cleaves peptides in various proteins in a process that requires ATP hydrolysis. Has a chymotrypsin-like activity. Plays a major role in the degradation of misfolded proteins. The sequence is that of ATP-dependent Clp protease proteolytic subunit 3 from Rhizobium etli (strain ATCC 51251 / DSM 11541 / JCM 21823 / NBRC 15573 / CFN 42).